A 40-amino-acid chain; its full sequence is Alpha-1B-glycoprotein (40 aa).

Asn23 is a glycosylation site (N-linked (GlcNAc...) asparagine).

Interacts with CRISP3. As to expression, plasma.

It localises to the secreted. The sequence is that of Alpha-1B-glycoprotein (A1BG) from Sus scrofa (Pig).